The primary structure comprises 395 residues: Probable beta-1,3-galactosyltransferase 8 (395 aa).

Residues 5–27 traverse the membrane as a helical; Signal-anchor for type II membrane protein segment; that stretch reads AASGKAIIVLCLASFLAGSLFMS. Asn117 is a glycosylation site (N-linked (GlcNAc...) asparagine).

The protein belongs to the glycosyltransferase 31 family. Mn(2+) is required as a cofactor.

The protein resides in the golgi apparatus membrane. It participates in protein modification; protein glycosylation. Functionally, beta-1,3-galactosyltransferase that transfers galactose from UDP-galactose to substrates with a terminal glycosyl residue. This chain is Probable beta-1,3-galactosyltransferase 8 (B3GALT8), found in Arabidopsis thaliana (Mouse-ear cress).